We begin with the raw amino-acid sequence, 399 residues long: Salivary protein Tsal1 (399 aa).

The N-terminal stretch at 1–22 is a signal peptide; the sequence is MALKLVYGVFTLALLGISSVNA. The N-linked (GlcNAc...) asparagine glycan is linked to asparagine 268.

This sequence belongs to the DNA/RNA non-specific endonuclease family. Requires a divalent metal cation as cofactor. As to expression, saliva (at protein level).

The protein localises to the secreted. Functionally, binds double-stranded DNA (dsDNA) with high affinity. Binds double-stranded RNA. Binds single-stranded DNA with lower affinity and with a preference for purine-rich sequences. Shows residual nuclease activity for dsDNA. May facilitate blood meal intake by lowering the local viscosity created by the release of host DNA. The chain is Salivary protein Tsal1 from Glossina morsitans morsitans (Savannah tsetse fly).